Reading from the N-terminus, the 142-residue chain is ATP synthase epsilon chain (142 aa).

It belongs to the ATPase epsilon chain family. As to quaternary structure, F-type ATPases have 2 components, CF(1) - the catalytic core - and CF(0) - the membrane proton channel. CF(1) has five subunits: alpha(3), beta(3), gamma(1), delta(1), epsilon(1). CF(0) has three main subunits: a, b and c.

The protein resides in the cell inner membrane. In terms of biological role, produces ATP from ADP in the presence of a proton gradient across the membrane. This chain is ATP synthase epsilon chain, found in Shewanella frigidimarina (strain NCIMB 400).